Reading from the N-terminus, the 488-residue chain is Aspartyl/glutamyl-tRNA(Asn/Gln) amidotransferase subunit B (488 aa).

It belongs to the GatB/GatE family. GatB subfamily. In terms of assembly, heterotrimer of A, B and C subunits.

The enzyme catalyses L-glutamyl-tRNA(Gln) + L-glutamine + ATP + H2O = L-glutaminyl-tRNA(Gln) + L-glutamate + ADP + phosphate + H(+). The catalysed reaction is L-aspartyl-tRNA(Asn) + L-glutamine + ATP + H2O = L-asparaginyl-tRNA(Asn) + L-glutamate + ADP + phosphate + 2 H(+). Allows the formation of correctly charged Asn-tRNA(Asn) or Gln-tRNA(Gln) through the transamidation of misacylated Asp-tRNA(Asn) or Glu-tRNA(Gln) in organisms which lack either or both of asparaginyl-tRNA or glutaminyl-tRNA synthetases. The reaction takes place in the presence of glutamine and ATP through an activated phospho-Asp-tRNA(Asn) or phospho-Glu-tRNA(Gln). The chain is Aspartyl/glutamyl-tRNA(Asn/Gln) amidotransferase subunit B from Ralstonia nicotianae (strain ATCC BAA-1114 / GMI1000) (Ralstonia solanacearum).